A 118-amino-acid polypeptide reads, in one-letter code: Small ribosomal subunit protein uS13 (118 aa).

Positions 92-118 (RKGLPVRGQRTKTNARTRKGPRKPIRK) are disordered.

It belongs to the universal ribosomal protein uS13 family. As to quaternary structure, part of the 30S ribosomal subunit. Forms a loose heterodimer with protein S19. Forms two bridges to the 50S subunit in the 70S ribosome.

Located at the top of the head of the 30S subunit, it contacts several helices of the 16S rRNA. In the 70S ribosome it contacts the 23S rRNA (bridge B1a) and protein L5 of the 50S subunit (bridge B1b), connecting the 2 subunits; these bridges are implicated in subunit movement. Contacts the tRNAs in the A and P-sites. This chain is Small ribosomal subunit protein uS13, found in Pseudomonas putida (strain W619).